A 356-amino-acid chain; its full sequence is Heparan sulfate 2-O-sulfotransferase 1 (356 aa).

Over 1 to 11 the chain is Cytoplasmic; sequence MGLLRIMMPPK. Residues 12-28 traverse the membrane as a helical; Signal-anchor for type II membrane protein segment; the sequence is LQLLAVVAFAVAMLFLE. A coiled-coil region spans residues 24–51; it reads MLFLENQIQKLEESRSKLERAIARHEVR. Over 29–356 the chain is Lumenal; the sequence is NQIQKLEESR…FYEKIYPKSN (328 aa). Lysine 83, threonine 84, alanine 85, serine 86, threonine 87, and serine 88 together coordinate adenosine 3',5'-bisphosphate. Asparagine 108 and asparagine 127 each carry an N-linked (GlcNAc...) asparagine glycan. Active-site residues include histidine 140 and histidine 142. Adenosine 3',5'-bisphosphate contacts are provided by arginine 164 and serine 172. 2 cysteine pairs are disulfide-bonded: cysteine 201–cysteine 209 and cysteine 222–cysteine 228. Adenosine 3',5'-bisphosphate contacts are provided by tyrosine 279, serine 285, threonine 290, and lysine 293.

Belongs to the sulfotransferase 3 family. As to quaternary structure, homotrimer. Interacts with the C5-epimerase GLCE. N-glycosylated.

Its subcellular location is the golgi apparatus membrane. In terms of biological role, catalyzes the transfer of a sulfo group from 3'-phospho-5'-adenylyl sulfate (PAPS) to the 2-OH position of iduronic acid (IdoA) or glucuronic acid (GlcA) within the heparan sulfate (HS) chain and participates in HS biosynthesis. Required for metanephric development of kidney formation, suggesting that 2-O-sulfation within HS is essential for signaling between ureteric bud and metanephric mesenchyme. The protein is Heparan sulfate 2-O-sulfotransferase 1 of Homo sapiens (Human).